Consider the following 658-residue polypeptide: Threonine--tRNA ligase (658 aa).

The region spanning 1 to 61 (MSDVRVIIQR…KDGETVEAVE (61 aa)) is the TGS domain. The catalytic stretch occupies residues 259 to 554 (DHRKLGSELD…LLEHYAGAMP (296 aa)). 3 residues coordinate Zn(2+): Cys-353, His-404, and His-531.

The protein belongs to the class-II aminoacyl-tRNA synthetase family. As to quaternary structure, homodimer. The cofactor is Zn(2+).

It is found in the cytoplasm. The enzyme catalyses tRNA(Thr) + L-threonine + ATP = L-threonyl-tRNA(Thr) + AMP + diphosphate + H(+). Functionally, catalyzes the attachment of threonine to tRNA(Thr) in a two-step reaction: L-threonine is first activated by ATP to form Thr-AMP and then transferred to the acceptor end of tRNA(Thr). Also edits incorrectly charged L-seryl-tRNA(Thr). The chain is Threonine--tRNA ligase from Streptomyces coelicolor (strain ATCC BAA-471 / A3(2) / M145).